The chain runs to 492 residues: N-succinylglutamate 5-semialdehyde dehydrogenase (492 aa).

NAD(+) is bound at residue 220–225 (GSANTG). Catalysis depends on residues glutamate 243 and cysteine 277.

The protein belongs to the aldehyde dehydrogenase family. AstD subfamily.

The enzyme catalyses N-succinyl-L-glutamate 5-semialdehyde + NAD(+) + H2O = N-succinyl-L-glutamate + NADH + 2 H(+). It participates in amino-acid degradation; L-arginine degradation via AST pathway; L-glutamate and succinate from L-arginine: step 4/5. In terms of biological role, catalyzes the NAD-dependent reduction of succinylglutamate semialdehyde into succinylglutamate. This Escherichia coli O9:H4 (strain HS) protein is N-succinylglutamate 5-semialdehyde dehydrogenase.